Here is a 68-residue protein sequence, read N- to C-terminus: Phosphatidylinositol N-acetylglucosaminyltransferase ERI1 subunit (68 aa).

A run of 2 helical transmembrane segments spans residues 8 to 28 (FLVL…FYWL) and 34 to 54 (FLHY…WALI).

Component of the phosphatidylinositol N-acetylglucosaminyltransferase (GPI-GlcNAc transferase) complex composed of at least GPI1, GPI2, GPI3, GPI15, GPI19 and ERI1. Interacts with GPI2. Interacts with GTP-bound RAS2 in an effector loop-dependent manner.

Its subcellular location is the endoplasmic reticulum membrane. It participates in glycolipid biosynthesis; glycosylphosphatidylinositol-anchor biosynthesis. Probable component of the GPI-GlcNAc transferase (GPI-GnT) complex in the endoplasmic reticulum, a complex that catalyzes transfer of GlcNAc from UDP-GlcNAc to an acceptor phosphatidylinositol, the first step in the production of GPI-anchors for cell surface proteins. Ras may inhibit the enzyme activity of the GPI-GnT complex via the association between ERI1 and RAS2. The sequence is that of Phosphatidylinositol N-acetylglucosaminyltransferase ERI1 subunit (ERI1) from Saccharomyces cerevisiae (strain ATCC 204508 / S288c) (Baker's yeast).